Reading from the N-terminus, the 69-residue chain is Putative membrane protein insertion efficiency factor (69 aa).

The protein belongs to the UPF0161 family.

It is found in the cell inner membrane. Its function is as follows. Could be involved in insertion of integral membrane proteins into the membrane. The sequence is that of Putative membrane protein insertion efficiency factor from Azoarcus sp. (strain BH72).